A 197-amino-acid polypeptide reads, in one-letter code: Probable inosine/xanthosine triphosphatase (197 aa).

9–14 (TSNPIK) contacts substrate. Mg(2+) is bound by residues D36 and D65.

It belongs to the YjjX NTPase family. Homodimer. Mg(2+) is required as a cofactor. Mn(2+) serves as cofactor.

The catalysed reaction is XTP + H2O = XDP + phosphate + H(+). It catalyses the reaction ITP + H2O = IDP + phosphate + H(+). Its function is as follows. Phosphatase that hydrolyzes non-canonical purine nucleotides such as XTP and ITP to their respective diphosphate derivatives. Probably excludes non-canonical purines from DNA/RNA precursor pool, thus preventing their incorporation into DNA/RNA and avoiding chromosomal lesions. The sequence is that of Probable inosine/xanthosine triphosphatase from Aeropyrum pernix (strain ATCC 700893 / DSM 11879 / JCM 9820 / NBRC 100138 / K1).